The chain runs to 147 residues: Cytochrome c-type biogenesis protein CcmE (147 aa).

Residues 1-7 (MKPRHKR) lie on the Cytoplasmic side of the membrane. Residues 8-28 (AAIIAGGLAALGIAAYLVLNA) traverse the membrane as a helical; Signal-anchor for type II membrane protein segment. Over 29–147 (FQSNLVFFFS…QIQKTIKSLK (119 aa)) the chain is Periplasmic. 2 residues coordinate heme: H121 and Y125.

It belongs to the CcmE/CycJ family.

It is found in the cell inner membrane. Functionally, heme chaperone required for the biogenesis of c-type cytochromes. Transiently binds heme delivered by CcmC and transfers the heme to apo-cytochromes in a process facilitated by CcmF and CcmH. This is Cytochrome c-type biogenesis protein CcmE from Albidiferax ferrireducens (strain ATCC BAA-621 / DSM 15236 / T118) (Rhodoferax ferrireducens).